We begin with the raw amino-acid sequence, 869 residues long: Leucine--tRNA ligase (869 aa).

A 'HIGH' region motif is present at residues 42–52 (PYPSGRLHMGH). Positions 620-624 (KMSKS) match the 'KMSKS' region motif. Lys623 contacts ATP.

The protein belongs to the class-I aminoacyl-tRNA synthetase family.

It localises to the cytoplasm. It catalyses the reaction tRNA(Leu) + L-leucine + ATP = L-leucyl-tRNA(Leu) + AMP + diphosphate. This Hamiltonella defensa subsp. Acyrthosiphon pisum (strain 5AT) protein is Leucine--tRNA ligase.